Consider the following 412-residue polypeptide: Squamosa promoter-binding-like protein 2 (412 aa).

The disordered stretch occupies residues 1-81 (MDWDAKMPSW…AAAAGKRARA (81 aa)). The span at 18 to 31 (PSGGGGGGGGGGGA) shows a compositional bias: gly residues. Low complexity-rich tracts occupy residues 48–57 (VSAASAAPAA) and 67–81 (SSSS…RARA). Residues 89-167 (VPACSVEGCA…DGHNKRRRKP (79 aa)) form an SBP-type zinc finger. Zn(2+) is bound by residues C92, C97, C115, H118, C134, C137, H141, and C153. The Bipartite nuclear localization signal signature appears at 150–166 (KRSCRKRLDGHNKRRRK).

Expressed in stems, leaf sheaths, and young panicles.

The protein localises to the nucleus. Its function is as follows. Trans-acting factor that binds specifically to the consensus nucleotide sequence 5'-TNCGTACAA-3'. May be involved in panicle development. This Oryza sativa subsp. japonica (Rice) protein is Squamosa promoter-binding-like protein 2 (SPL2).